A 670-amino-acid chain; its full sequence is Leucine-rich repeat-containing protein 45 (670 aa).

LRR repeat units lie at residues 58–80 (TLCTELVLSDCMLSEEGATLLLR), 87–107 (VLRFLDLKGNNLRAAGAEALG), 115–136 (SIQSLTLEWNSLGTWDDAFATF), 145–166 (ALQRLDLRNNQISHKGAEELAL), 173–194 (TLQQLDLRWNNVGLLGGRALMN), and 201–212 (TLWRLDLAGNNI). A coiled-coil region spans residues 252 to 645 (REEKSKQFLD…IARIRDEEAQ (394 aa)). The residue at position 661 (Ser-661) is a Phosphoserine; by NEK2.

Homomer. Interacts with CROCC/rootletin and CEP250. Interacts with CEP44. Interacts with CCDC102B (via N-terminus). Post-translationally, phosphorylated by NEK2 during misosis, phosphorylation reduces centrosomal localization which subsequently leads to centrosome separation.

The protein localises to the cytoplasm. Its subcellular location is the cytoskeleton. The protein resides in the microtubule organizing center. It localises to the centrosome. Its function is as follows. Component of the proteinaceous fiber-like linker between two centrioles, required for centrosome cohesion. The polypeptide is Leucine-rich repeat-containing protein 45 (LRRC45) (Homo sapiens (Human)).